The primary structure comprises 589 residues: Poly(3-hydroxyalkanoate) polymerase subunit PhaC (589 aa).

The interval 1-23 (MATGKGAAASTQEGKSQPFKVTP) is disordered. Cys319 is an active-site residue.

This sequence belongs to the PHA/PHB synthase family. Type I PhaC subfamily. Monomer.

It is found in the cytoplasm. It carries out the reaction (3R)-3-hydroxybutanoyl-CoA + [(3R)-hydroxybutanoate](n) = [(3R)-hydroxybutanoate](n+1) + CoA. The protein operates within biopolymer metabolism; poly-(R)-3-hydroxybutanoate biosynthesis. In terms of biological role, polymerizes (R)-3-hydroxybutyryl-CoA to create polyhydroxybutyrate (PHB) which consists of thousands of hydroxybutyrate molecules linked end to end. PHB serves as an intracellular energy reserve material when cells grow under conditions of nutrient limitation. This chain is Poly(3-hydroxyalkanoate) polymerase subunit PhaC, found in Cupriavidus necator (strain ATCC 17699 / DSM 428 / KCTC 22496 / NCIMB 10442 / H16 / Stanier 337) (Ralstonia eutropha).